Here is a 359-residue protein sequence, read N- to C-terminus: Heat-inducible transcription repressor HrcA (359 aa).

Belongs to the HrcA family.

In terms of biological role, negative regulator of class I heat shock genes (grpE-dnaK-dnaJ and groELS operons). Prevents heat-shock induction of these operons. This Rhizobium meliloti (strain 1021) (Ensifer meliloti) protein is Heat-inducible transcription repressor HrcA.